A 203-amino-acid polypeptide reads, in one-letter code: Small ribosomal subunit protein uS4c (203 aa).

The region spanning 89 to 152 (MRLDNILFRL…QSRTLIQNSL (64 aa)) is the S4 RNA-binding domain.

Belongs to the universal ribosomal protein uS4 family. Part of the 30S ribosomal subunit. Contacts protein S5. The interaction surface between S4 and S5 is involved in control of translational fidelity.

It localises to the plastid. One of the primary rRNA binding proteins, it binds directly to 16S rRNA where it nucleates assembly of the body of the 30S subunit. In terms of biological role, with S5 and S12 plays an important role in translational accuracy. The protein is Small ribosomal subunit protein uS4c (rps4) of Orobanche minor (Small broomrape).